Consider the following 874-residue polypeptide: MYMSTSEIRAAFLEYFRSQGHQVVSSSSLVPHNDPTLLFTNAGMNQFKDVFLGADKRAYNRATTSQRCVRAGGKHNDLENVGYTARHHTFFEMLGNFSFGDYFKQDAIRFAWEFLTGTLKLPKERLLVTVYETDDEAFNIWANEVGVPVERIVRIGDNKGAAFASDNFWQMSDTGPCGPCTEIFYDHGDHIWGGPPGSPEEDGDRFIEIWNVVFMQFNRQADGTMEPLPRPSVDTGMGLERISAIMQGVHSNYEIDIFQALIKKAAEIVGTTDLSNQSLRVIADHIRSCAFLIADGVMPSNEGRGYVLRRIIRRAVRHGRKLGATDVFFYKLAAELAVQMKDVGAELIAQLPLVKRVLRIEEEQFVRTLDRGLLLLEDVLANLGDAKVIPGEVVFKLYDTYGFPADLTADVVREREIGIDEEGFNAEMEKQRARAKEASSFGVNYNEVLKLDFETPFTGYKQLSQKTSVVGIYKDGVEVNGLIAGEEAVVVLAETPFYAESGGQVGDCGVLKVDDGIFAVTDTQKAGKAIIHKGYLELGTLEKGALVEAVVDGERRQAVALNHSVTHLLHAALRQALGDHVTQKGSLVGAERMRFDFSHFEGLTMATIRRVEELVNAQIRANHDIATQVMDLEAAKSAGAMALFGEKYEDDVRVVRMGDYSTELCGGTHAKRTGDIGFFKIIAESGIAAGVRRIEAVTGKGAIDFMHQMGEQIEEAAALVKGDQFSIADKVRQILDKSKMMERELEQLKAKLAAQAGSDLLSQVIEINGQKVLIAALEGADPKSLRGMLDELKNRMKSGVVLLATSSDDKVNLIAGVTSDLTGKVKAGELVNLVAQQVGGKGGGRPDMAQAGGTQPEAVPAALQSVHSWLEERL.

His563, His567, Cys665, and His669 together coordinate Zn(2+).

It belongs to the class-II aminoacyl-tRNA synthetase family. Zn(2+) is required as a cofactor.

It localises to the cytoplasm. The catalysed reaction is tRNA(Ala) + L-alanine + ATP = L-alanyl-tRNA(Ala) + AMP + diphosphate. Its function is as follows. Catalyzes the attachment of alanine to tRNA(Ala) in a two-step reaction: alanine is first activated by ATP to form Ala-AMP and then transferred to the acceptor end of tRNA(Ala). Also edits incorrectly charged Ser-tRNA(Ala) and Gly-tRNA(Ala) via its editing domain. The sequence is that of Alanine--tRNA ligase from Aeromonas salmonicida (strain A449).